We begin with the raw amino-acid sequence, 668 residues long: Threonine--tRNA ligase (668 aa).

One can recognise a TGS domain in the interval 1–64; sequence MSEAIFLTFP…ADGKIEIITR (64 aa). The segment at 245–553 is catalytic; that stretch reads DHRKLGREMD…LIENFAGHLP (309 aa). Residues C347, H398, and H530 each contribute to the Zn(2+) site.

This sequence belongs to the class-II aminoacyl-tRNA synthetase family. Homodimer. Zn(2+) is required as a cofactor.

The protein resides in the cytoplasm. It catalyses the reaction tRNA(Thr) + L-threonine + ATP = L-threonyl-tRNA(Thr) + AMP + diphosphate + H(+). Functionally, catalyzes the attachment of threonine to tRNA(Thr) in a two-step reaction: L-threonine is first activated by ATP to form Thr-AMP and then transferred to the acceptor end of tRNA(Thr). Also edits incorrectly charged L-seryl-tRNA(Thr). In Rhizobium leguminosarum bv. trifolii (strain WSM2304), this protein is Threonine--tRNA ligase.